Reading from the N-terminus, the 500-residue chain is NAD(P)H-quinone oxidoreductase chain 4, chloroplastic (500 aa).

14 consecutive transmembrane segments (helical) span residues 4-24, 37-57, 87-107, 113-130, 134-154, 167-187, 208-228, 242-262, 272-292, 305-325, 330-350, 386-406, 416-436, and 462-482; these read FPWL…IFFL, IFIC…HFQL, IGPI…AWPV, LFHF…GSFS, LLLF…LLSM, FILY…GIGL, ALEI…SPII, HYST…YGLV, AHSI…IYAA, IAYS…SITD, GAIL…FLAG, LALP…GIIT, ILIT…SLSM, and LFVL…PDFV.

Belongs to the complex I subunit 4 family.

It localises to the plastid. The protein resides in the chloroplast thylakoid membrane. It catalyses the reaction a plastoquinone + NADH + (n+1) H(+)(in) = a plastoquinol + NAD(+) + n H(+)(out). The catalysed reaction is a plastoquinone + NADPH + (n+1) H(+)(in) = a plastoquinol + NADP(+) + n H(+)(out). This is NAD(P)H-quinone oxidoreductase chain 4, chloroplastic from Vitis vinifera (Grape).